Here is a 285-residue protein sequence, read N- to C-terminus: Small ribosomal subunit protein uS2 (285 aa).

The tract at residues 228–285 (RAGLSADKDAKPEAGAGEPLAEWEQELLSQAAPAAEAEAAPAAEAEAAPAAEAPATEA) is disordered. Residues 258–285 (AAPAAEAEAAPAAEAEAAPAAEAPATEA) show a composition bias toward low complexity.

Belongs to the universal ribosomal protein uS2 family.

The chain is Small ribosomal subunit protein uS2 from Rhodococcus erythropolis (strain PR4 / NBRC 100887).